We begin with the raw amino-acid sequence, 464 residues long: Armadillo repeat-containing protein 6 homolog (464 aa).

The residue at position 9 (Thr9) is a Phosphothreonine. 4 ARM repeats span residues 235-275 (AHEH…TLAV), 287-331 (GGLK…QQGV), 332-374 (APII…FDTG), and 375-418 (IAEV…ISFG).

This sequence belongs to the ARMC6 family.

The protein is Armadillo repeat-containing protein 6 homolog of Drosophila melanogaster (Fruit fly).